The following is a 233-amino-acid chain: Lipoprotein-releasing system ATP-binding protein LolD (233 aa).

One can recognise an ABC transporter domain in the interval leucine 6–glutamate 233. Glycine 42–serine 49 provides a ligand contact to ATP.

It belongs to the ABC transporter superfamily. Lipoprotein translocase (TC 3.A.1.125) family. The complex is composed of two ATP-binding proteins (LolD) and two transmembrane proteins (LolC and LolE).

Its subcellular location is the cell inner membrane. In terms of biological role, part of the ABC transporter complex LolCDE involved in the translocation of mature outer membrane-directed lipoproteins, from the inner membrane to the periplasmic chaperone, LolA. Responsible for the formation of the LolA-lipoprotein complex in an ATP-dependent manner. This Shigella boydii serotype 4 (strain Sb227) protein is Lipoprotein-releasing system ATP-binding protein LolD.